Reading from the N-terminus, the 806-residue chain is Ribonucleoside-diphosphate reductase large subunit-like protein (806 aa).

Belongs to the ribonucleoside diphosphate reductase large chain family.

Its subcellular location is the virion. It is found in the host cytoplasm. Does not possess a ribonucleotide reductase activity. Betaherpesviruses probably use another strategy to expand the dNTP pool in a quiescent host cell. In Human herpesvirus 7 (strain JI) (HHV-7), this protein is Ribonucleoside-diphosphate reductase large subunit-like protein.